A 340-amino-acid polypeptide reads, in one-letter code: Ribonucleoside-diphosphate reductase subunit beta (340 aa).

Fe cation contacts are provided by D88 and H122. Residue Y126 is part of the active site. H216 is a Fe cation binding site.

This sequence belongs to the ribonucleoside diphosphate reductase small chain family. As to quaternary structure, tetramer of two alpha and two beta subunits. Fe cation is required as a cofactor.

The catalysed reaction is a 2'-deoxyribonucleoside 5'-diphosphate + [thioredoxin]-disulfide + H2O = a ribonucleoside 5'-diphosphate + [thioredoxin]-dithiol. Functionally, provides the precursors necessary for DNA synthesis. Catalyzes the biosynthesis of deoxyribonucleotides from the corresponding ribonucleotides. The sequence is that of Ribonucleoside-diphosphate reductase subunit beta (nrdF) from Mycoplasma genitalium (strain ATCC 33530 / DSM 19775 / NCTC 10195 / G37) (Mycoplasmoides genitalium).